The primary structure comprises 161 residues: Cytochrome b6-f complex subunit 4 (161 aa).

3 helical membrane-spanning segments follow: residues 37-57, 96-116, and 132-152; these read LLYI…GLAV, LLGV…PFIE, and SVFL…TLPI.

The protein belongs to the cytochrome b family. PetD subfamily. The 4 large subunits of the cytochrome b6-f complex are cytochrome b6, subunit IV (17 kDa polypeptide, PetD), cytochrome f and the Rieske protein, while the 4 small subunits are PetG, PetL, PetM and PetN. The complex functions as a dimer.

The protein localises to the cellular thylakoid membrane. In terms of biological role, component of the cytochrome b6-f complex, which mediates electron transfer between photosystem II (PSII) and photosystem I (PSI), cyclic electron flow around PSI, and state transitions. The polypeptide is Cytochrome b6-f complex subunit 4 (Acaryochloris marina (strain MBIC 11017)).